Reading from the N-terminus, the 761-residue chain is Subtilisin-like protease SBT3.15 (761 aa).

Residues M1–F21 form the signal peptide. The propeptide at L22–K120 is activation peptide. An Inhibitor I9 domain is found at V41–L119. The Peptidase S8 domain occupies P134–A613. N151 carries an N-linked (GlcNAc...) asparagine glycan. The active-site Charge relay system is the D164. N197 carries an N-linked (GlcNAc...) asparagine glycan. Catalysis depends on H241, which acts as the Charge relay system. N-linked (GlcNAc...) asparagine glycans are attached at residues N256 and N384. The Charge relay system role is filled by S544. N-linked (GlcNAc...) asparagine glycosylation occurs at N636.

It belongs to the peptidase S8 family.

The protein localises to the secreted. This is Subtilisin-like protease SBT3.15 from Arabidopsis thaliana (Mouse-ear cress).